The following is a 352-amino-acid chain: MERKPSVCRKSGSWNCLLVLFLLLLFTVVSVNFLLYMYIDQMYAPSRFSHSEVNLCPYGHFKIATIKNCSPWLTCETIKKEVRKLKLVGEGAVKKVFLSEWKGLKVALSELKSLDLQDDFLHGLRMLQSMQSRYVVVLVGYCKETFSILTEYHPLGSLKDLDETFSFPKYQGFNTWQNRLKLAIEYVSIINYLHNSPHGTLIMCDSNDLDKALSQYMLTSDFHVVANDLDALPVVDKEKGILVKCGQREITGHFVAPEQLWPYGPNIEFSDDLMPSYDEKTDIWKIPAVIDHLLGHVKGSDIVRFHLFDIHSECGKANPSERPSAQMVLDTYRKVLALLMKEMAVAETREML.

The Cytoplasmic segment spans residues 1–16 (MERKPSVCRKSGSWNC). The chain crosses the membrane as a helical; Signal-anchor for type II membrane protein span at residues 17-37 (LLVLFLLLLFTVVSVNFLLYM). Residues 38 to 352 (YIDQMYAPSR…MAVAETREML (315 aa)) lie on the Lumenal side of the membrane. In terms of domain architecture, Protein kinase spans 82 to 352 (VRKLKLVGEG…MAVAETREML (271 aa)).

This sequence belongs to the protein kinase superfamily. Ser/Thr protein kinase family. STKL subfamily.

It localises to the endoplasmic reticulum membrane. The enzyme catalyses 3-O-[beta-D-GalNAc-(1-&gt;3)-beta-D-GlcNAc-(1-&gt;4)-alpha-D-Man]-L-Thr-[protein] + ATP = 3-O-[beta-D-GalNAc-(1-&gt;3)-beta-D-GlcNAc-(1-&gt;4)-(O-6-P-alpha-D-Man)]-Thr-[protein] + ADP + H(+). Functionally, protein O-mannose kinase that specifically mediates phosphorylation at the 6-position of an O-mannose of the trisaccharide (N-acetylgalactosamine (GalNAc)-beta-1,3-N-acetylglucosamine (GlcNAc)-beta-1,4-mannose) to generate phosphorylated O-mannosyl trisaccharide (N-acetylgalactosamine-beta-1,3-N-acetylglucosamine-beta-1,4-(phosphate-6-)mannose). Phosphorylated O-mannosyl trisaccharide is a carbohydrate structure present in alpha-dystroglycan (dag1), which is required for binding laminin G-like domain-containing extracellular proteins with high affinity. Only shows kinase activity when the GalNAc-beta-3-GlcNAc-beta-terminus is linked to the 4-position of O-mannose, suggesting that this disaccharide serves as the substrate recognition motif. The polypeptide is Protein O-mannose kinase (pomk) (Xenopus laevis (African clawed frog)).